We begin with the raw amino-acid sequence, 497 residues long: Cytochrome P450 2D6 (497 aa).

Asp-301 is a binding site for substrate. Cys-443 contacts heme.

This sequence belongs to the cytochrome P450 family. Requires heme as cofactor.

It is found in the endoplasmic reticulum membrane. Its subcellular location is the microsome membrane. It carries out the reaction (5Z,8Z,11Z,14Z)-eicosatetraenoate + reduced [NADPH--hemoprotein reductase] + O2 = (8R,9S)-epoxy-(5Z,11Z,14Z)-eicosatrienoate + oxidized [NADPH--hemoprotein reductase] + H2O + H(+). The enzyme catalyses (5Z,8Z,11Z,14Z)-eicosatetraenoate + reduced [NADPH--hemoprotein reductase] + O2 = (11R,12S)-epoxy-(5Z,8Z,14Z)-eicosatrienoate + oxidized [NADPH--hemoprotein reductase] + H2O + H(+). The catalysed reaction is (5Z,8Z,11Z,14Z)-eicosatetraenoate + reduced [NADPH--hemoprotein reductase] + O2 = (14S,15R)-epoxy-(5Z,8Z,11Z)-eicosatrienoate + oxidized [NADPH--hemoprotein reductase] + H2O + H(+). It catalyses the reaction N-(5Z,8Z,11Z,14Z-eicosatetraenoyl)-ethanolamine + reduced [NADPH--hemoprotein reductase] + O2 = N-(8,9-epoxy-5Z,11Z,14Z-eicosatrienoyl)-ethanolamine + oxidized [NADPH--hemoprotein reductase] + H2O + H(+). It carries out the reaction N-(5Z,8Z,11Z,14Z-eicosatetraenoyl)-ethanolamine + reduced [NADPH--hemoprotein reductase] + O2 = N-(11,12-epoxy-5Z,8Z,14Z-eicosatrienoyl)-ethanolamine + oxidized [NADPH--hemoprotein reductase] + H2O + H(+). The enzyme catalyses N-(5Z,8Z,11Z,14Z-eicosatetraenoyl)-ethanolamine + reduced [NADPH--hemoprotein reductase] + O2 = N-(14,15-epoxy-5Z,8Z,11Z-eicosatrienoyl)-ethanolamine + oxidized [NADPH--hemoprotein reductase] + H2O + H(+). The catalysed reaction is N-(5Z,8Z,11Z,14Z-eicosatetraenoyl)-ethanolamine + reduced [NADPH--hemoprotein reductase] + O2 = N-(20-hydroxy-5Z,8Z,11Z,14Z-eicosatetraenoyl)-ethanolamine + oxidized [NADPH--hemoprotein reductase] + H2O + H(+). It catalyses the reaction (5Z,8Z,11Z,14Z,17Z)-eicosapentaenoate + reduced [NADPH--hemoprotein reductase] + O2 = (17S,18R)-epoxy-(5Z,8Z,11Z,14Z)-eicosatetraenoate + oxidized [NADPH--hemoprotein reductase] + H2O + H(+). It carries out the reaction (4Z,7Z,10Z,13Z,16Z,19Z)-docosahexaenoate + reduced [NADPH--hemoprotein reductase] + O2 = (19R,20S)-epoxy-(4Z,7Z,10Z,13Z,16Z)-docosapentaenoate + oxidized [NADPH--hemoprotein reductase] + H2O + H(+). The enzyme catalyses (4Z,7Z,10Z,13Z,16Z,19Z)-docosahexaenoate + reduced [NADPH--hemoprotein reductase] + O2 = (19S,20R)-epoxy-(4Z,7Z,10Z,13Z,16Z)-docosapentaenoate + oxidized [NADPH--hemoprotein reductase] + H2O + H(+). The catalysed reaction is cholesterol + reduced [NADPH--hemoprotein reductase] + O2 = 25-hydroxycholesterol + oxidized [NADPH--hemoprotein reductase] + H2O + H(+). It catalyses the reaction all-trans-retinol + reduced [NADPH--hemoprotein reductase] + O2 = all-trans-retinal + oxidized [NADPH--hemoprotein reductase] + 2 H2O + H(+). Its pathway is cofactor metabolism; retinol metabolism. It functions in the pathway lipid metabolism; fatty acid metabolism. It participates in steroid metabolism; cholesterol metabolism. Functionally, a cytochrome P450 monooxygenase involved in the metabolism of fatty acids, steroids and retinoids. Mechanistically, uses molecular oxygen inserting one oxygen atom into a substrate, and reducing the second into a water molecule, with two electrons provided by NADPH via cytochrome P450 reductase (NADPH--hemoprotein reductase). Catalyzes the epoxidation of double bonds of polyunsaturated fatty acids (PUFA). Metabolizes endocannabinoid arachidonoylethanolamide (anandamide) to 20-hydroxyeicosatetraenoic acid ethanolamide (20-HETE-EA) and 8,9-, 11,12-, and 14,15-epoxyeicosatrienoic acid ethanolamides (EpETrE-EAs), potentially modulating endocannabinoid system signaling. Catalyzes the hydroxylation of carbon-hydrogen bonds. Metabolizes cholesterol toward 25-hydroxycholesterol, a physiological regulator of cellular cholesterol homeostasis. Catalyzes the oxidative transformations of all-trans retinol to all-trans retinal, a precursor for the active form all-trans-retinoic acid. Also involved in the oxidative metabolism of drugs such as antiarrhythmics, adrenoceptor antagonists, and tricyclic antidepressants. The sequence is that of Cytochrome P450 2D6 (CYP2D6) from Pan paniscus (Pygmy chimpanzee).